Consider the following 493-residue polypeptide: MDIRTTTTTATDWAGDLLALGFFEDQVELSGSLAELDQKLDGILQELIAETEFKGKAGKSAIARISSKSPIRKIMILGLGKAEDFKLDTLRRTAATIARSAKKEKGKTLGISLPLWNNDPTSTTQAIAEGIELALHQDHRFKSNSEDNNDNHAPEQIQLLGLGDQTTAIERAQRICSGVILARELVAAPANVVTPVTLAETARDLAQEYGLDVEVLGQAECEALGMGAFLGVALASDLPPQFIHLTYRPSGTPRRKLAIIGKGLTFDSGGLNLKTGGSGIETMKMDMAGSAATLGAAKVVGQLKPDVEVHFIVAATENMISGRAMHPGDILTASNGKTIEVNNTDAEGRLTLADALVFAEKLGVDALVDLATLTGACIVALGDDIAGLWSSDDALAEQILQAADHSGEKLWRMPMEEKYFEGMKSQIADMKNTGPRAGGSITAALFLKQFVKETPWAHLDVAGPVWADKENGYNNAGATGYGVRTLVNWVLGS.

Lys262 and Asp267 together coordinate Mn(2+). Lys274 is a catalytic residue. Mn(2+) is bound by residues Asp286, Asp345, and Glu347. The active site involves Arg349.

Belongs to the peptidase M17 family. It depends on Mn(2+) as a cofactor.

Its subcellular location is the cytoplasm. The catalysed reaction is Release of an N-terminal amino acid, Xaa-|-Yaa-, in which Xaa is preferably Leu, but may be other amino acids including Pro although not Arg or Lys, and Yaa may be Pro. Amino acid amides and methyl esters are also readily hydrolyzed, but rates on arylamides are exceedingly low.. It catalyses the reaction Release of an N-terminal amino acid, preferentially leucine, but not glutamic or aspartic acids.. Its function is as follows. Presumably involved in the processing and regular turnover of intracellular proteins. Catalyzes the removal of unsubstituted N-terminal amino acids from various peptides. The polypeptide is Probable cytosol aminopeptidase (Cyanothece sp. (strain PCC 7425 / ATCC 29141)).